Reading from the N-terminus, the 346-residue chain is Protein Spea_1705 (346 aa).

The active-site Proton acceptor is the Cys101. Residues 102-103 (GH), Asp262, and 267-268 (GT) contribute to the substrate site.

It belongs to the proline racemase family.

The enzyme catalyses trans-3-hydroxy-L-proline = 1-pyrroline-2-carboxylate + H2O. In terms of biological role, in vitro, catalyzes the dehydration of trans-3-hydroxy-L-proline (t3LHyp) to Delta(1)-pyrroline-2-carboxylate (Pyr2C), albeit with very low efficiency. The physiological substrate may be different. Displays neither trans-4-hydroxy-L-proline (t4LHyp) epimerase nor proline racemase activity. This chain is Protein Spea_1705, found in Shewanella pealeana (strain ATCC 700345 / ANG-SQ1).